The following is a 524-amino-acid chain: D-3-phosphoglycerate dehydrogenase (524 aa).

NAD(+)-binding positions include 149–150 (RI), D169, 229–231 (CAR), and D255. R231 is a catalytic residue. E260 is a catalytic residue. H278 acts as the Proton donor in catalysis. Residue 278–281 (HQGA) coordinates NAD(+). An ACT domain is found at 452 to 524 (LAIIKHIDRP…NIKDVAVINL (73 aa)).

The protein belongs to the D-isomer specific 2-hydroxyacid dehydrogenase family.

The catalysed reaction is (2R)-3-phosphoglycerate + NAD(+) = 3-phosphooxypyruvate + NADH + H(+). The protein operates within amino-acid biosynthesis; L-serine biosynthesis; L-serine from 3-phospho-D-glycerate: step 1/3. The polypeptide is D-3-phosphoglycerate dehydrogenase (serA) (Methanocaldococcus jannaschii (strain ATCC 43067 / DSM 2661 / JAL-1 / JCM 10045 / NBRC 100440) (Methanococcus jannaschii)).